The following is a 979-amino-acid chain: Protein SMAX1-LIKE 6 (979 aa).

One can recognise a Clp R domain in the interval 8-190; that stretch reads ARECLTEEAA…PVTQLSSRFS (183 aa). 2 repeat regions span residues 12 to 86 and 100 to 190; these read LTEE…LDRL and VSNS…SRFS. Residues 833–837 carry the EAR motif; that stretch reads LDLNL.

Belongs to the ClpA/ClpB family. As to quaternary structure, interacts with TPL/TPR in an EAR-motif dependent manner. Interacts with TPR3. Interacts with MAX2 and TPR2. Interacts with D14. The interaction with D14 occurs in the presence of (2'R) stereoisomers of strigolactones, but not (2'S) stereoisomers. Ubiquitinated upon strigolactone treatment. Probable proteolytic target of SCF(MAX2)-mediated stigolactone signaling. Detected in roots, seedlings and axillary branches. Expressed in the primary rosette buds and expanding leaves of adult rosettes, the vasculature of the hypocotyls, cotyledons, and mature roots, and in the midvein and petioles of young leaves.

Its subcellular location is the nucleus. Its function is as follows. Probable component of a transcriptional corepressor complex involved in branching control. Regulates cotyledon expansion and lateral root growth, but not germination or hypocotyl elongation. Promotes auxin transport and PIN1 accumulation in the stem and represses BRC1/TCP18 expression in axillary buds. The protein is Protein SMAX1-LIKE 6 of Arabidopsis thaliana (Mouse-ear cress).